The chain runs to 184 residues: Bifunctional protein PyrR (184 aa).

Positions 99 to 111 match the PRPP-binding motif; it reads IVLVDDVLYTGRT.

It belongs to the purine/pyrimidine phosphoribosyltransferase family. PyrR subfamily. Homodimer and homohexamer; in equilibrium.

It catalyses the reaction UMP + diphosphate = 5-phospho-alpha-D-ribose 1-diphosphate + uracil. Functionally, regulates transcriptional attenuation of the pyrimidine nucleotide (pyr) operon by binding in a uridine-dependent manner to specific sites on pyr mRNA. This disrupts an antiterminator hairpin in the RNA and favors formation of a downstream transcription terminator, leading to a reduced expression of downstream genes. In terms of biological role, also displays a weak uracil phosphoribosyltransferase activity which is not physiologically significant. The chain is Bifunctional protein PyrR from Acetivibrio thermocellus (strain ATCC 27405 / DSM 1237 / JCM 9322 / NBRC 103400 / NCIMB 10682 / NRRL B-4536 / VPI 7372) (Clostridium thermocellum).